The chain runs to 162 residues: Transcription antitermination protein RfaH (162 aa).

Belongs to the RfaH family. As to quaternary structure, interacts with both the nontemplate DNA and the RNA polymerase (RNAP).

In terms of biological role, enhances distal genes transcription elongation in a specialized subset of operons that encode extracytoplasmic components. RfaH is recruited into a multi-component RNA polymerase complex by the ops element, which is a short conserved DNA sequence located downstream of the main promoter of these operons. Once bound, RfaH suppresses pausing and inhibits Rho-dependent and intrinsic termination at a subset of sites. Termination signals are bypassed, which allows complete synthesis of long RNA chains. Also negatively controls expression and surface presentation of AG43 and possibly another AG43-independent factor that mediates cell-cell interactions and biofilm formation,. The chain is Transcription antitermination protein RfaH from Escherichia coli O6:K15:H31 (strain 536 / UPEC).